Reading from the N-terminus, the 293-residue chain is 4-hydroxybenzoate octaprenyltransferase (293 aa).

The next 8 helical transmembrane spans lie at 26–48, 98–118, 122–142, 145–165, 167–187, 218–238, 241–261, and 272–292; these read PIGT…GGMP, TEAK…DLLL, TFLL…MKRF, LPQV…YGAV, ESLP…TVAY, IIAL…WISQ, WGYF…CWLT, and AFLN…VGIY.

This sequence belongs to the UbiA prenyltransferase family. The cofactor is Mg(2+).

Its subcellular location is the cell inner membrane. It catalyses the reaction all-trans-octaprenyl diphosphate + 4-hydroxybenzoate = 4-hydroxy-3-(all-trans-octaprenyl)benzoate + diphosphate. Its pathway is cofactor biosynthesis; ubiquinone biosynthesis. Its function is as follows. Catalyzes the prenylation of para-hydroxybenzoate (PHB) with an all-trans polyprenyl group. Mediates the second step in the final reaction sequence of ubiquinone-8 (UQ-8) biosynthesis, which is the condensation of the polyisoprenoid side chain with PHB, generating the first membrane-bound Q intermediate 3-octaprenyl-4-hydroxybenzoate. The sequence is that of 4-hydroxybenzoate octaprenyltransferase from Actinobacillus pleuropneumoniae serotype 3 (strain JL03).